A 345-amino-acid chain; its full sequence is Phosphoribosylformylglycinamidine cyclo-ligase (345 aa).

Belongs to the AIR synthase family.

It localises to the cytoplasm. It carries out the reaction 2-formamido-N(1)-(5-O-phospho-beta-D-ribosyl)acetamidine + ATP = 5-amino-1-(5-phospho-beta-D-ribosyl)imidazole + ADP + phosphate + H(+). It functions in the pathway purine metabolism; IMP biosynthesis via de novo pathway; 5-amino-1-(5-phospho-D-ribosyl)imidazole from N(2)-formyl-N(1)-(5-phospho-D-ribosyl)glycinamide: step 2/2. The polypeptide is Phosphoribosylformylglycinamidine cyclo-ligase (Tolumonas auensis (strain DSM 9187 / NBRC 110442 / TA 4)).